The chain runs to 86 residues: Large ribosomal subunit protein bL28 (86 aa).

This sequence belongs to the bacterial ribosomal protein bL28 family.

The polypeptide is Large ribosomal subunit protein bL28 (Phocaeicola vulgatus (strain ATCC 8482 / DSM 1447 / JCM 5826 / CCUG 4940 / NBRC 14291 / NCTC 11154) (Bacteroides vulgatus)).